The primary structure comprises 144 residues: Cell division protein SepF (144 aa).

The segment covering Thr21–Pro38 has biased composition (polar residues). Positions Thr21 to Asn40 are disordered.

Belongs to the SepF family. As to quaternary structure, homodimer. Interacts with FtsZ.

The protein localises to the cytoplasm. In terms of biological role, cell division protein that is part of the divisome complex and is recruited early to the Z-ring. Probably stimulates Z-ring formation, perhaps through the cross-linking of FtsZ protofilaments. Its function overlaps with FtsA. This chain is Cell division protein SepF, found in Latilactobacillus sakei subsp. sakei (strain 23K) (Lactobacillus sakei subsp. sakei).